The primary structure comprises 1638 residues: Ciliary rootlet coiled-coil protein 2 (1638 aa).

Positions 1 to 20 (MSSTSSNPDDGDTTEQSQLG) are enriched in polar residues. Disordered regions lie at residues 1 to 21 (MSST…QLGL), 39 to 92 (REDR…REES), 396 to 423 (ARLR…TSLH), and 1168 to 1213 (TRRK…NLQE). Residues 67–82 (SSSLGEEPLSGLREPP) show a composition bias toward low complexity. The stretch at 85–144 (TSHAREESELLQEELTRLEDLLAQADAEREELASRCHMVSQRLQARLDTTEARLRKSELE) forms a coiled coil. Positions 406-421 (SPHQRMSPARTSSPTS) are enriched in polar residues. 2 coiled-coil regions span residues 426-1234 (LQAV…VQKE) and 1281-1315 (LQEA…AEGA). Over residues 1180-1193 (RTLEAENQRKRQEV) the composition is skewed to basic and acidic residues. 2 disordered regions span residues 1338 to 1383 (RNLL…VPVD) and 1506 to 1551 (ALEE…QTTS). Residues 1349–1371 (SPTTGSSQTRPGRQRTSPPTRSY) are compositionally biased toward polar residues. Coiled-coil stretches lie at residues 1412–1506 (RDNS…LRQA) and 1542–1576 (RRAL…TEQE).

It belongs to the rootletin family.

The chain is Ciliary rootlet coiled-coil protein 2 from Mus musculus (Mouse).